Consider the following 772-residue polypeptide: A type blood N-acetyl-alpha-D-galactosamine deacetylase (772 aa).

An N-terminal signal peptide occupies residues 1–27 (MRNRRKAVSLLTGLLVTAQLFPTAALA). 2 residues coordinate substrate: Ser87 and His123. Asp126 provides a ligand contact to a divalent metal cation. Residues 180–402 (WSKPTSDAER…WRIGYAENSF (223 aa)) are deacetylase activity. Tyr236 provides a ligand contact to substrate. A divalent metal cation is bound at residue His278. The F5/8 type C domain occupies 494–605 (SDDLEIAVVE…KDLVASGSDW (112 aa)). The segment at 502–765 (VENPYTLIPQ…VCVSPVVDFD (264 aa)) is CBM32 carbohydrate-binding domain. The tract at residues 515–772 (TATATSVYGG…DFDYFSYVGE (258 aa)) is not required for activity on soluble substrates.

It depends on a divalent metal cation as a cofactor.

It carries out the reaction an N-acetyl-alpha-D-galactosaminyl-(1-&gt;3)-[alpha-L-fucosyl-(1-&gt;2)]-beta-D-galactosyl derivative + H2O = an alpha-D-galactosaminyl-(1-&gt;3)-[alpha-L-fucosyl-(1-&gt;2)]-beta-D-galactosyl derivative + acetate. Inhibited by EDTA. One of an enzyme pair that work together to convert the A antigen to the H antigen of the O blood type, which together release galactosamine. Catalyzes the first step in the conversion, generating the substrate for the subsequent enzyme (FpGalNase, AC P0DTR5). Works on many different A antigen subtypes. Glu-90 probably activates a nucleophilic water molecule to start the deacetylation reaction. This Flavonifractor plautii (Fusobacterium plautii) protein is A type blood N-acetyl-alpha-D-galactosamine deacetylase.